A 1293-amino-acid chain; its full sequence is Phosphoribosylformylglycinamidine synthase (1293 aa).

ATP contacts are provided by residues 305-316 (GAATGSGGEIRD), 384-386 (TGY), and Ala-676. A disordered region spans residues 307–326 (ATGSGGEIRDEGATGRGSKP). Mg(2+)-binding residues include Asp-677, Glu-716, Asn-720, and Asp-884. Ser-886 contacts ATP. The region spanning 1040 to 1293 (MAILREQGVN…MFRNARVKIG (254 aa)) is the Glutamine amidotransferase type-1 domain. Cys-1133 (nucleophile) is an active-site residue. Catalysis depends on residues His-1258 and Glu-1260.

It in the N-terminal section; belongs to the FGAMS family. As to quaternary structure, monomer.

The protein resides in the cytoplasm. It carries out the reaction N(2)-formyl-N(1)-(5-phospho-beta-D-ribosyl)glycinamide + L-glutamine + ATP + H2O = 2-formamido-N(1)-(5-O-phospho-beta-D-ribosyl)acetamidine + L-glutamate + ADP + phosphate + H(+). Its pathway is purine metabolism; IMP biosynthesis via de novo pathway; 5-amino-1-(5-phospho-D-ribosyl)imidazole from N(2)-formyl-N(1)-(5-phospho-D-ribosyl)glycinamide: step 1/2. In terms of biological role, phosphoribosylformylglycinamidine synthase involved in the purines biosynthetic pathway. Catalyzes the ATP-dependent conversion of formylglycinamide ribonucleotide (FGAR) and glutamine to yield formylglycinamidine ribonucleotide (FGAM) and glutamate. The protein is Phosphoribosylformylglycinamidine synthase of Shewanella frigidimarina (strain NCIMB 400).